The following is a 641-amino-acid chain: 1-deoxy-D-xylulose-5-phosphate synthase (641 aa).

Thiamine diphosphate contacts are provided by residues His78 and 119–121; that span reads AHS. Asp150 contributes to the Mg(2+) binding site. Residues 151–152, Asn179, Tyr288, and Glu370 contribute to the thiamine diphosphate site; that span reads GA. Residue Asn179 coordinates Mg(2+).

Belongs to the transketolase family. DXPS subfamily. In terms of assembly, homodimer. Mg(2+) serves as cofactor. It depends on thiamine diphosphate as a cofactor.

It catalyses the reaction D-glyceraldehyde 3-phosphate + pyruvate + H(+) = 1-deoxy-D-xylulose 5-phosphate + CO2. The protein operates within metabolic intermediate biosynthesis; 1-deoxy-D-xylulose 5-phosphate biosynthesis; 1-deoxy-D-xylulose 5-phosphate from D-glyceraldehyde 3-phosphate and pyruvate: step 1/1. In terms of biological role, catalyzes the acyloin condensation reaction between C atoms 2 and 3 of pyruvate and glyceraldehyde 3-phosphate to yield 1-deoxy-D-xylulose-5-phosphate (DXP). In Azorhizobium caulinodans (strain ATCC 43989 / DSM 5975 / JCM 20966 / LMG 6465 / NBRC 14845 / NCIMB 13405 / ORS 571), this protein is 1-deoxy-D-xylulose-5-phosphate synthase.